The following is a 428-amino-acid chain: MNIAVVGLSHKTAPVEIREKLSIPEPQTESAIAQLTSYPHIDEVAILSTCNRLEIYIVAGETDHGIREVTQFLSEHSKLPVHSLRQHLFVLLHEDAVMHIMRVAAGLDSLVLGEGQILAQVKNTHKLGQQYNGIKTILNRLFKQALTAGKRVRTETSIGTGAVSISSAAVELAQIKAENLAACRVTILGAGKMSRLLVQHLVSKGATQISIVNRSRERAQELAKQFSEHPIRTHLLPEMMTVIAESHLVFTSTSATEPILDRAKLEMVLAPNQPLMLFDISVPRNVHTDVNELANVQAFNVDDLKAVVAQNYESRRKMAQEAERLLEEEIEAFDIWWRSLETVSTISSLRSKIETIREQELEKALSRLGSEFGDKHQEVIEALTRGIVNKILHDPMVQLRAQQDVEARRRCMQTLQMLFNLDVGEQFS.

Substrate is bound by residues 49-52 (TCNR), Ser109, 114-116 (EGQ), and Gln120. Residue Cys50 is the Nucleophile of the active site. 189–194 (GAGKMS) is a binding site for NADP(+).

This sequence belongs to the glutamyl-tRNA reductase family. In terms of assembly, homodimer.

It catalyses the reaction (S)-4-amino-5-oxopentanoate + tRNA(Glu) + NADP(+) = L-glutamyl-tRNA(Glu) + NADPH + H(+). Its pathway is porphyrin-containing compound metabolism; protoporphyrin-IX biosynthesis; 5-aminolevulinate from L-glutamyl-tRNA(Glu): step 1/2. It participates in porphyrin-containing compound metabolism; chlorophyll biosynthesis. In terms of biological role, catalyzes the NADPH-dependent reduction of glutamyl-tRNA(Glu) to glutamate 1-semialdehyde (GSA). This Trichormus variabilis (strain ATCC 29413 / PCC 7937) (Anabaena variabilis) protein is Glutamyl-tRNA reductase.